We begin with the raw amino-acid sequence, 145 residues long: Small ribosomal subunit protein uS19 (145 aa).

Alanine 2 carries the N-acetylalanine modification. A Glycyl lysine isopeptide (Lys-Gly) (interchain with G-Cter in SUMO2) cross-link involves residue lysine 108.

Belongs to the universal ribosomal protein uS19 family. In terms of assembly, component of the small ribosomal subunit.

It localises to the cytoplasm. Functionally, component of the small ribosomal subunit. The ribosome is a large ribonucleoprotein complex responsible for the synthesis of proteins in the cell. This chain is Small ribosomal subunit protein uS19 (RPS15), found in Bos taurus (Bovine).